Consider the following 163-residue polypeptide: ATP synthase subunit b (163 aa).

The helical transmembrane segment at 10-29 (VFMQMFHFLLMLVVLRLFAY) threads the bilayer.

This sequence belongs to the ATPase B chain family. In terms of assembly, F-type ATPases have 2 components, F(1) - the catalytic core - and F(0) - the membrane proton channel. F(1) has five subunits: alpha(3), beta(3), gamma(1), delta(1), epsilon(1). F(0) has three main subunits: a(1), b(2) and c(10-14). The alpha and beta chains form an alternating ring which encloses part of the gamma chain. F(1) is attached to F(0) by a central stalk formed by the gamma and epsilon chains, while a peripheral stalk is formed by the delta and b chains.

The protein resides in the cell membrane. Functionally, f(1)F(0) ATP synthase produces ATP from ADP in the presence of a proton or sodium gradient. F-type ATPases consist of two structural domains, F(1) containing the extramembraneous catalytic core and F(0) containing the membrane proton channel, linked together by a central stalk and a peripheral stalk. During catalysis, ATP synthesis in the catalytic domain of F(1) is coupled via a rotary mechanism of the central stalk subunits to proton translocation. In terms of biological role, component of the F(0) channel, it forms part of the peripheral stalk, linking F(1) to F(0). This Desulforudis audaxviator (strain MP104C) protein is ATP synthase subunit b.